We begin with the raw amino-acid sequence, 408 residues long: Succinylornithine transaminase (408 aa).

An N6-(pyridoxal phosphate)lysine modification is found at lysine 252.

It belongs to the class-III pyridoxal-phosphate-dependent aminotransferase family. AstC subfamily. Pyridoxal 5'-phosphate is required as a cofactor.

It carries out the reaction N(2)-succinyl-L-ornithine + 2-oxoglutarate = N-succinyl-L-glutamate 5-semialdehyde + L-glutamate. It participates in amino-acid degradation; L-arginine degradation via AST pathway; L-glutamate and succinate from L-arginine: step 3/5. In terms of biological role, catalyzes the transamination of N(2)-succinylornithine and alpha-ketoglutarate into N(2)-succinylglutamate semialdehyde and glutamate. Can also act as an acetylornithine aminotransferase. This chain is Succinylornithine transaminase, found in Salmonella dublin (strain CT_02021853).